A 570-amino-acid chain; its full sequence is PTS system lactose-specific EIICB component (570 aa).

The PTS EIIC type-3 domain maps to 9–410 (IEKGKPFFEK…VVDIIIYYPF (402 aa)). 9 helical membrane-spanning segments follow: residues 31 to 51 (GFISAMPVILFSSIFLLIAYV), 65 to 85 (AILMKPYNYTMGLVAFLVAGT), 104 to 124 (INFISTMLAAMCGFLFLASDP), 133 to 153 (AFMGTKGLLTAFLSAFVTVIV), 178 to 198 (FKDLIPFSAVIIILYALDLVI), 223 to 243 (GWIGVTIIFGAFALFWFVGIH), 283 to 303 (MFIVTFGGTGATLVVPFMFMW), 340 to 360 (VFFIPFVLAPIVNVWIFKLFV), and 382 to 402 (IIMGTGFGLWSFVLAITLIVV). Positions 467–570 (QTNVLVLCAG…LDFVQQQFEN (104 aa)) constitute a PTS EIIB type-3 domain. The Phosphocysteine intermediate; for EIIB activity role is filled by Cys474. Cys474 is modified (phosphocysteine; by EIIA).

The protein localises to the cell membrane. The enzyme catalyses lactose(out) + N(pros)-phospho-L-histidyl-[protein] = lactose 6-phosphate(in) + L-histidyl-[protein]. Its function is as follows. The phosphoenolpyruvate-dependent sugar phosphotransferase system (sugar PTS), a major carbohydrate active transport system, catalyzes the phosphorylation of incoming sugar substrates concomitantly with their translocation across the cell membrane. The enzyme II LacEF PTS system is involved in lactose transport. The protein is PTS system lactose-specific EIICB component of Staphylococcus aureus (strain MSSA476).